The following is a 33-amino-acid chain: Vejocalcin (33 aa).

Cystine bridges form between Cys-3–Cys-17, Cys-10–Cys-21, and Cys-16–Cys-32. The interval 23–24 (RR) is essential for stimulation of [3H]ryanodine binding to RYR1.

Expressed by the venom gland.

Its subcellular location is the secreted. In terms of biological role, this toxin stabilizes ryanodine receptor 1 (RyR1) opening in a long-lasting subconductance state (60% of the full conductance state). Furthermore, it triggers calcium release from sarcoplasmic vesicles (31 nM are enough to induce a sharp release, and 65% of the total calcium is released after toxin (100 nM) addition) probably by acting as a cell-penetrating peptide (CPP). In addition, it has been shown to dose-dependently stimulate ryanodine binding to RyR1 (EC(50)=3.7 nM). It also augments the bell-shaped calcium-[3H]ryanodine binding curve that is maximal at about 10 uM calcium concentration. It binds a different site as ryanodine. It acts synergistically with caffeine. In vivo, intracerebroventricular injection into mice induces neurotoxic symptoms, followed by death. The chain is Vejocalcin from Vaejovis mexicanus (Mexican scorpion).